The primary structure comprises 442 residues: 3-dehydroquinate synthase, chloroplastic (442 aa).

A chloroplast-targeting transit peptide spans 1 to 61 (MASSFCPKQA…TTRLKVLATS (61 aa)). NAD(+) contacts are provided by residues N119, 150–152 (DGE), K155, 183–188 (GGVIGD), 208–209 (TT), K221, K230, and 248–251 (TLNT). E263 serves as a coordination point for a divalent metal cation. Residue K305 coordinates NAD(+). H326 and H343 together coordinate a divalent metal cation.

It belongs to the sugar phosphate cyclases superfamily. Dehydroquinate synthase family. Homodimer. A divalent metal cation serves as cofactor. It depends on NAD(+) as a cofactor. As to expression, highly expressed in roots. Lower expression in stems, flowers and cotyledons. Barely detected in leaves.

Its subcellular location is the plastid. It is found in the chloroplast. The catalysed reaction is 7-phospho-2-dehydro-3-deoxy-D-arabino-heptonate = 3-dehydroquinate + phosphate. It participates in metabolic intermediate biosynthesis; chorismate biosynthesis; chorismate from D-erythrose 4-phosphate and phosphoenolpyruvate: step 2/7. Catalyzes the second step in the shikimate pathway. This Solanum lycopersicum (Tomato) protein is 3-dehydroquinate synthase, chloroplastic (DHQS).